The following is a 615-amino-acid chain: Dihydroxy-acid dehydratase (615 aa).

Mg(2+) is bound at residue Asp-83. Residue Cys-124 participates in [2Fe-2S] cluster binding. The Mg(2+) site is built by Asp-125 and Lys-126. Lys-126 is subject to N6-carboxylysine. Residue Cys-199 participates in [2Fe-2S] cluster binding. Glu-495 contributes to the Mg(2+) binding site. Residue Ser-521 is the Proton acceptor of the active site.

It belongs to the IlvD/Edd family. Homodimer. The cofactor is [2Fe-2S] cluster. Mg(2+) serves as cofactor.

The enzyme catalyses (2R)-2,3-dihydroxy-3-methylbutanoate = 3-methyl-2-oxobutanoate + H2O. It catalyses the reaction (2R,3R)-2,3-dihydroxy-3-methylpentanoate = (S)-3-methyl-2-oxopentanoate + H2O. It functions in the pathway amino-acid biosynthesis; L-isoleucine biosynthesis; L-isoleucine from 2-oxobutanoate: step 3/4. Its pathway is amino-acid biosynthesis; L-valine biosynthesis; L-valine from pyruvate: step 3/4. Functions in the biosynthesis of branched-chain amino acids. Catalyzes the dehydration of (2R,3R)-2,3-dihydroxy-3-methylpentanoate (2,3-dihydroxy-3-methylvalerate) into 2-oxo-3-methylpentanoate (2-oxo-3-methylvalerate) and of (2R)-2,3-dihydroxy-3-methylbutanoate (2,3-dihydroxyisovalerate) into 2-oxo-3-methylbutanoate (2-oxoisovalerate), the penultimate precursor to L-isoleucine and L-valine, respectively. This Corynebacterium jeikeium (strain K411) protein is Dihydroxy-acid dehydratase.